Consider the following 391-residue polypeptide: Processive diacylglycerol beta-glucosyltransferase (391 aa).

Belongs to the glycosyltransferase 28 family. UgtP subfamily.

Its subcellular location is the cell membrane. It carries out the reaction a 1,2-diacyl-3-O-(beta-D-glucopyranosyl)-sn-glycerol + UDP-alpha-D-glucose = a 1,2-diacyl-3-O-(beta-D-Glc-(1-&gt;6)-beta-D-Glc)-sn-glycerol + UDP + H(+). It catalyses the reaction a 1,2-diacyl-sn-glycerol + UDP-alpha-D-glucose = a 1,2-diacyl-3-O-(beta-D-glucopyranosyl)-sn-glycerol + UDP + H(+). It functions in the pathway glycolipid metabolism; diglucosyl-diacylglycerol biosynthesis. Its function is as follows. Processive glucosyltransferase involved in the biosynthesis of both the bilayer- and non-bilayer-forming membrane glucolipids. Is able to successively transfer two glucosyl residues to diacylglycerol (DAG), thereby catalyzing the formation of beta-monoglucosyl-DAG (3-O-(beta-D-glucopyranosyl)-1,2-diacyl-sn-glycerol) and beta-diglucosyl-DAG (3-O-(beta-D-glucopyranosyl-beta-(1-&gt;6)-D-glucopyranosyl)-1,2-diacyl-sn-glycerol). Beta-diglucosyl-DAG is the predominant glycolipid found in Bacillales and is also used as a membrane anchor for lipoteichoic acid (LTA). This is Processive diacylglycerol beta-glucosyltransferase from Staphylococcus epidermidis (strain ATCC 12228 / FDA PCI 1200).